A 405-amino-acid polypeptide reads, in one-letter code: Argininosuccinate synthase (405 aa).

ATP is bound by residues 10 to 18 (AYSGGLDTS) and Ala37. L-citrulline is bound by residues Tyr88 and Ser93. ATP is bound at residue Gly118. Residues Thr120, Asn124, and Asp125 each contribute to the L-aspartate site. Asn124 contributes to the L-citrulline binding site. Arg128, Ser179, Ser188, Glu264, and Tyr276 together coordinate L-citrulline.

Belongs to the argininosuccinate synthase family. Type 1 subfamily. As to quaternary structure, homotetramer.

It is found in the cytoplasm. The enzyme catalyses L-citrulline + L-aspartate + ATP = 2-(N(omega)-L-arginino)succinate + AMP + diphosphate + H(+). It functions in the pathway amino-acid biosynthesis; L-arginine biosynthesis; L-arginine from L-ornithine and carbamoyl phosphate: step 2/3. The chain is Argininosuccinate synthase from Pseudomonas aeruginosa (strain LESB58).